A 201-amino-acid chain; its full sequence is FMN-dependent NADH:quinone oxidoreductase (201 aa).

Residues Ser10, 16 to 18 (SQS), 96 to 99 (MYNF), and 140 to 143 (SRGG) contribute to the FMN site.

It belongs to the azoreductase type 1 family. In terms of assembly, homodimer. FMN serves as cofactor.

The catalysed reaction is 2 a quinone + NADH + H(+) = 2 a 1,4-benzosemiquinone + NAD(+). It carries out the reaction N,N-dimethyl-1,4-phenylenediamine + anthranilate + 2 NAD(+) = 2-(4-dimethylaminophenyl)diazenylbenzoate + 2 NADH + 2 H(+). Quinone reductase that provides resistance to thiol-specific stress caused by electrophilic quinones. In terms of biological role, also exhibits azoreductase activity. Catalyzes the reductive cleavage of the azo bond in aromatic azo compounds to the corresponding amines. This chain is FMN-dependent NADH:quinone oxidoreductase, found in Yersinia enterocolitica serotype O:8 / biotype 1B (strain NCTC 13174 / 8081).